The chain runs to 506 residues: UDP-N-acetylglucosamine--peptide N-acetylglucosaminyltransferase GtfA subunit (506 aa).

Residues M1–T78 form an N-terminus R-fold-1 region. G16–Y19 is a binding site for UDP. Residues V79–Y195 form an extended beta-sheet domain region. A C-terminus R-fold-1 region spans residues S196–G306. N-acetyl-D-glucosamine is bound at residue H242. The tract at residues S307–L506 is R-fold-2. UDP-binding positions include R328, Y357, and G383–A385. Residue G405–G407 coordinates N-acetyl-D-glucosamine. Residue T409 participates in UDP binding.

The protein belongs to the glycosyltransferase group 1 family. Glycosyltransferase 4 subfamily. In terms of assembly, forms a heterotetramer with 2 subunits each of GtfA and GtfB. Part of the accessory SecA2/SecY2 protein translocation apparatus required to export cell wall protein GspB.

Its subcellular location is the cytoplasm. The protein localises to the cell membrane. The catalysed reaction is L-seryl-[protein] + UDP-N-acetyl-alpha-D-glucosamine = 3-O-[N-acetyl-alpha-D-glucosaminyl]-L-seryl-[protein] + UDP + H(+). Its pathway is protein modification; protein glycosylation. Its function is as follows. Required for polymorphic O-glycosylation of GspB, a serine-rich repeat cell wall protein encoded upstream in the same operon. Catalyzes the first step in glycosylation by transferring N-acetylglucosamine from UDP-GlcNAc to serine residues in GspB. Part of the accessory SecA2/SecY2 system specifically required to export GspB. Upon coexpression in E.coli with GtfB glycosylates GspB constructs. Glycosylation probably occurs intracellularly. Requires GtfB for glycosylation activity, it has no activity alone. Does not use UDP-glucose as substrate. Has a fast, probably processive glycosylation phase followed by a slower, non-processive phase. The enzyme probably modifies its tertiary conformation by opening and closing its intersubunit interfaces to accomodate the increasingly glycosylated substrate; protein substrate recognition is provided by GtfB. This Streptococcus gordonii protein is UDP-N-acetylglucosamine--peptide N-acetylglucosaminyltransferase GtfA subunit.